The primary structure comprises 330 residues: Zinc finger protein sdz-12 (330 aa).

C2H2-type zinc fingers lie at residues 27–48 (PQCQ…HMKH), 63–85 (FRCE…QITH), 91–113 (KKCS…LHNH), 120–144 (FDCP…LVNH), and 153–176 (APCG…HFDH). The span at 183–195 (SAPAPTSSARLSP) shows a compositional bias: low complexity. The tract at residues 183-203 (SAPAPTSSARLSPITVSTSGS) is disordered. Residues 271–293 (FECKHCTIKFHDATMSIMHNALH) form a C2H2-type 6 zinc finger.

This sequence belongs to the krueppel C2H2-type zinc-finger protein family. Expressed in the somatic gonad.

In terms of biological role, together with ehn-3, may play a role in gonadogenesis. The polypeptide is Zinc finger protein sdz-12 (Caenorhabditis elegans).